A 343-amino-acid chain; its full sequence is 4-hydroxythreonine-4-phosphate dehydrogenase (343 aa).

Residues histidine 141 and threonine 142 each contribute to the substrate site. The a divalent metal cation site is built by histidine 175, histidine 220, and histidine 275. Substrate-binding residues include lysine 283, asparagine 292, and arginine 301.

This sequence belongs to the PdxA family. As to quaternary structure, homodimer. Zn(2+) is required as a cofactor. Mg(2+) serves as cofactor. Requires Co(2+) as cofactor.

It is found in the cytoplasm. It carries out the reaction 4-(phosphooxy)-L-threonine + NAD(+) = 3-amino-2-oxopropyl phosphate + CO2 + NADH. The protein operates within cofactor biosynthesis; pyridoxine 5'-phosphate biosynthesis; pyridoxine 5'-phosphate from D-erythrose 4-phosphate: step 4/5. Functionally, catalyzes the NAD(P)-dependent oxidation of 4-(phosphooxy)-L-threonine (HTP) into 2-amino-3-oxo-4-(phosphooxy)butyric acid which spontaneously decarboxylates to form 3-amino-2-oxopropyl phosphate (AHAP). The chain is 4-hydroxythreonine-4-phosphate dehydrogenase from Janthinobacterium sp. (strain Marseille) (Minibacterium massiliensis).